A 243-amino-acid polypeptide reads, in one-letter code: Fibroblast growth factor 12 (243 aa).

Disordered stretches follow at residues 1 to 39 (MAAAIASSLIRQKRQARESNSDRVSASKRRSSPSKDGRS) and 216 to 243 (IGEKQGRSRKSSGTPTMNGGKVVNQDST). The Bipartite nuclear localization signal signature appears at 11–38 (RQKRQARESNSDRVSASKRRSSPSKDGR).

Belongs to the heparin-binding growth factors family. Interacts with the C-terminal region of SCN9A. As to expression, brain, eye and testis; highly expressed in embryonic retina, olfactory epithelium, olfactory bulb, and in a segmental pattern of the body wall; in adult olfactory bulb, less in cerebellum, deep cerebellar nuclei, cortex and multiple midbrain structures.

The protein localises to the nucleus. Its function is as follows. Involved in nervous system development and function. Involved in the positive regulation of voltage-gated sodium channel activity. Promotes neuronal excitability by elevating the voltage dependence of neuronal sodium channel SCN8A fast inactivation. This is Fibroblast growth factor 12 (FGF12) from Homo sapiens (Human).